Reading from the N-terminus, the 64-residue chain is Large ribosomal subunit protein bL35 (64 aa).

Positions 1-25 are disordered; sequence MPKLKTHSGAAKRFKKTATGKVKRS.

The protein belongs to the bacterial ribosomal protein bL35 family.

In Koribacter versatilis (strain Ellin345), this protein is Large ribosomal subunit protein bL35.